A 137-amino-acid polypeptide reads, in one-letter code: Nucleoside diphosphate kinase (137 aa).

Residues Lys9, Phe57, Arg85, Thr91, Arg102, and Asn112 each contribute to the ATP site. The active-site Pros-phosphohistidine intermediate is the His115.

Belongs to the NDK family. As to quaternary structure, homotetramer. It depends on Mg(2+) as a cofactor.

It is found in the cytoplasm. It carries out the reaction a 2'-deoxyribonucleoside 5'-diphosphate + ATP = a 2'-deoxyribonucleoside 5'-triphosphate + ADP. The catalysed reaction is a ribonucleoside 5'-diphosphate + ATP = a ribonucleoside 5'-triphosphate + ADP. Major role in the synthesis of nucleoside triphosphates other than ATP. The ATP gamma phosphate is transferred to the NDP beta phosphate via a ping-pong mechanism, using a phosphorylated active-site intermediate. In Campylobacter fetus subsp. fetus (strain 82-40), this protein is Nucleoside diphosphate kinase.